Consider the following 779-residue polypeptide: Probable ATP-dependent RNA helicase DHX40 (779 aa).

The interval 1-28 (MSRFPAVAGRAPRRQEEGERSRDLQEER) is disordered. Over residues 13 to 28 (RRQEEGERSRDLQEER) the composition is skewed to basic and acidic residues. The Helicase ATP-binding domain occupies 63-231 (IQAVRDNSFL…FGNCPIFDIP (169 aa)). An ATP-binding site is contributed by 76-83 (GNTGSGKT). The DEAH box signature appears at 173–176 (DEAH). In terms of domain architecture, Helicase C-terminal spans 263 to 442 (TMDIHLNEMA…SVVLTLKCLA (180 aa)). Residues 737–779 (SKDVLKKMQRRNDDKSISDARARFLERKQQRTQDHSDTRKETG) are disordered.

This sequence belongs to the DEAD box helicase family. DEAH subfamily. Ubiquitously expressed.

It catalyses the reaction ATP + H2O = ADP + phosphate + H(+). Its function is as follows. Probable ATP-dependent RNA helicase. This is Probable ATP-dependent RNA helicase DHX40 (DHX40) from Homo sapiens (Human).